The sequence spans 154 residues: Deoxyuridine 5'-triphosphate nucleotidohydrolase (154 aa).

Substrate-binding positions include 74-76, Asn87, 91-93, and Lys101; these read RSG and TID.

This sequence belongs to the dUTPase family. Mg(2+) is required as a cofactor.

It catalyses the reaction dUTP + H2O = dUMP + diphosphate + H(+). It functions in the pathway pyrimidine metabolism; dUMP biosynthesis; dUMP from dCTP (dUTP route): step 2/2. In terms of biological role, this enzyme is involved in nucleotide metabolism: it produces dUMP, the immediate precursor of thymidine nucleotides and it decreases the intracellular concentration of dUTP so that uracil cannot be incorporated into DNA. This Cytophaga hutchinsonii (strain ATCC 33406 / DSM 1761 / CIP 103989 / NBRC 15051 / NCIMB 9469 / D465) protein is Deoxyuridine 5'-triphosphate nucleotidohydrolase.